The primary structure comprises 368 residues: Type 2 DNA topoisomerase 6 subunit A (368 aa).

The Topo IIA-type catalytic domain maps to 9–148 (TEDEIARERL…FHMRPEESGA (140 aa)). Tyr-103 functions as the O-(5'-phospho-DNA)-tyrosine intermediate in the catalytic mechanism. Mg(2+) is bound by residues Glu-201 and Asp-253.

Belongs to the TOP6A family. Homodimer. Heterotetramer of two Top6A and two Top6B chains. The cofactor is Mg(2+).

The enzyme catalyses ATP-dependent breakage, passage and rejoining of double-stranded DNA.. In terms of biological role, relaxes both positive and negative superturns and exhibits a strong decatenase activity. This Natronomonas pharaonis (strain ATCC 35678 / DSM 2160 / CIP 103997 / JCM 8858 / NBRC 14720 / NCIMB 2260 / Gabara) (Halobacterium pharaonis) protein is Type 2 DNA topoisomerase 6 subunit A.